The sequence spans 445 residues: Tubulin beta-4 chain (445 aa).

The GTP site is built by Gln11, Glu69, Ser138, Gly142, Thr143, Gly144, Asn204, and Asn226. Position 69 (Glu69) interacts with Mg(2+). Positions 421 to 445 (EYQQYQDATADEEYDEEEEEERDAE) are disordered. A compositionally biased stretch (acidic residues) spans 429–445 (TADEEYDEEEEEERDAE).

Belongs to the tubulin family. As to quaternary structure, dimer of alpha and beta chains. A typical microtubule is a hollow water-filled tube with an outer diameter of 25 nm and an inner diameter of 15 nM. Alpha-beta heterodimers associate head-to-tail to form protofilaments running lengthwise along the microtubule wall with the beta-tubulin subunit facing the microtubule plus end conferring a structural polarity. Microtubules usually have 13 protofilaments but different protofilament numbers can be found in some organisms and specialized cells. It depends on Mg(2+) as a cofactor.

It localises to the cytoplasm. The protein localises to the cytoskeleton. Functionally, tubulin is the major constituent of microtubules, a cylinder consisting of laterally associated linear protofilaments composed of alpha- and beta-tubulin heterodimers. Microtubules grow by the addition of GTP-tubulin dimers to the microtubule end, where a stabilizing cap forms. Below the cap, tubulin dimers are in GDP-bound state, owing to GTPase activity of alpha-tubulin. In Triticum aestivum (Wheat), this protein is Tubulin beta-4 chain (TUBB4).